Consider the following 875-residue polypeptide: Receptor-like protein 33 (875 aa).

Residues 1–23 (MSLIPITFYFLFLFFSNFRGVFA) form the signal peptide. Topologically, residues 24–822 (VPNIHLCHFE…GESETLESEQ (799 aa)) are extracellular. N-linked (GlcNAc...) asparagine glycosylation is found at N65, N103, N133, N146, and N181. LRR repeat units follow at residues 110–133 (FHFL…SIGN), 134–157 (LSHL…SLGN), 159–182 (FHLT…LGNL), 183–205 (SYLT…SFGS), 206–230 (LNQL…VINL), 231–254 (TKLS…ITSL), 256–278 (ILES…LFTI), 280–302 (SITL…NISS), 303–327 (PSNL…ISRL), and 329–351 (NLRT…IFSH). N-linked (GlcNAc...) asparagine glycosylation is found at N229 and N250. N299 carries an N-linked (GlcNAc...) asparagine glycan. An LRR 11; degenerate repeat occupies 352 to 377 (LKLLGNLYLSHSNTTTTIDLNAVLSC). Residues N364, N395, and N411 are each glycosylated (N-linked (GlcNAc...) asparagine). 15 LRR repeats span residues 378–401 (FKML…SVSD), 404–427 (LGLI…LRTQ), 428–451 (RQMR…LLLQ), 455–477 (MHIS…TVVP), 479–502 (PSMK…ICSL), 503–528 (RSLI…KFKS), 530–549 (LSDL…KTII), 550–573 (KSLR…LIHF), 575–596 (TLEV…WLSS), 597–619 (LKKL…KTRF), 620–643 (PKLR…CFVE), 686–710 (LKIY…IGLL), 711–734 (KELH…MGNL), 735–758 (RELE…LGNL), and 760–783 (YLAY…QFRT). N-linked (GlcNAc...) asparagine glycans are attached at residues N490 and N514. An N-linked (GlcNAc...) asparagine glycan is attached at N587. A glycan (N-linked (GlcNAc...) asparagine) is linked at N633. N717, N757, and N765 each carry an N-linked (GlcNAc...) asparagine glycan. A helical membrane pass occupies residues 823 to 843 (VLSWIAAAIGFTPGIVLGLTI). The Cytoplasmic portion of the chain corresponds to 844–875 (GHIVLSSKPRWFFKVLYINNSRRRRRTRSEKS).

This sequence belongs to the RLP family.

The protein localises to the cell membrane. This Arabidopsis thaliana (Mouse-ear cress) protein is Receptor-like protein 33.